The primary structure comprises 221 residues: RNA pyrophosphohydrolase (221 aa).

Residues Gly6–Thr149 enclose the Nudix hydrolase domain. Positions Gly38–Gly59 match the Nudix box motif.

Belongs to the Nudix hydrolase family. RppH subfamily. It depends on a divalent metal cation as a cofactor.

Accelerates the degradation of transcripts by removing pyrophosphate from the 5'-end of triphosphorylated RNA, leading to a more labile monophosphorylated state that can stimulate subsequent ribonuclease cleavage. This Verminephrobacter eiseniae (strain EF01-2) protein is RNA pyrophosphohydrolase.